Here is a 201-residue protein sequence, read N- to C-terminus: UPF0301 protein CE2927 (201 aa).

The protein belongs to the UPF0301 (AlgH) family.

This Corynebacterium efficiens (strain DSM 44549 / YS-314 / AJ 12310 / JCM 11189 / NBRC 100395) protein is UPF0301 protein CE2927.